A 256-amino-acid chain; its full sequence is Triosephosphate isomerase (256 aa).

Residue 9-11 (NWK) participates in substrate binding. The active-site Electrophile is His-95. Residue Glu-167 is the Proton acceptor of the active site. Residues Gly-173, Ser-212, and 233-234 (GG) contribute to the substrate site.

This sequence belongs to the triosephosphate isomerase family. In terms of assembly, homodimer.

It localises to the cytoplasm. It catalyses the reaction D-glyceraldehyde 3-phosphate = dihydroxyacetone phosphate. It participates in carbohydrate biosynthesis; gluconeogenesis. Its pathway is carbohydrate degradation; glycolysis; D-glyceraldehyde 3-phosphate from glycerone phosphate: step 1/1. Its function is as follows. Involved in the gluconeogenesis. Catalyzes stereospecifically the conversion of dihydroxyacetone phosphate (DHAP) to D-glyceraldehyde-3-phosphate (G3P). The polypeptide is Triosephosphate isomerase (Proteus mirabilis (strain HI4320)).